A 124-amino-acid chain; its full sequence is uncharacterized protein (124 aa).

It is found in the cytoplasm. The protein resides in the nucleus. This is an uncharacterized protein from Schizosaccharomyces pombe (strain 972 / ATCC 24843) (Fission yeast).